Here is a 476-residue protein sequence, read N- to C-terminus: Aspartyl/glutamyl-tRNA(Asn/Gln) amidotransferase subunit B (476 aa).

This sequence belongs to the GatB/GatE family. GatB subfamily. In terms of assembly, heterotrimer of A, B and C subunits.

It catalyses the reaction L-glutamyl-tRNA(Gln) + L-glutamine + ATP + H2O = L-glutaminyl-tRNA(Gln) + L-glutamate + ADP + phosphate + H(+). The enzyme catalyses L-aspartyl-tRNA(Asn) + L-glutamine + ATP + H2O = L-asparaginyl-tRNA(Asn) + L-glutamate + ADP + phosphate + 2 H(+). Allows the formation of correctly charged Asn-tRNA(Asn) or Gln-tRNA(Gln) through the transamidation of misacylated Asp-tRNA(Asn) or Glu-tRNA(Gln) in organisms which lack either or both of asparaginyl-tRNA or glutaminyl-tRNA synthetases. The reaction takes place in the presence of glutamine and ATP through an activated phospho-Asp-tRNA(Asn) or phospho-Glu-tRNA(Gln). This Neisseria gonorrhoeae (strain ATCC 700825 / FA 1090) protein is Aspartyl/glutamyl-tRNA(Asn/Gln) amidotransferase subunit B.